The following is a 42-amino-acid chain: Potassium channel toxin gamma-KTx 3.4 (42 aa).

4 disulfides stabilise this stretch: cysteine 5–cysteine 23, cysteine 11–cysteine 34, cysteine 20–cysteine 39, and cysteine 24–cysteine 41.

The protein belongs to the ergtoxin family. Gamma-KTx 3 subfamily. As to expression, expressed by the venom gland.

Its subcellular location is the secreted. Blocks Kv11/ERG potassium channels. The polypeptide is Potassium channel toxin gamma-KTx 3.4 (Centruroides gracilis (Slenderbrown scorpion)).